Here is a 37-residue protein sequence, read N- to C-terminus: Small ribosomal subunit protein eS32 (37 aa).

The protein belongs to the eukaryotic ribosomal protein eS32 family. Part of the small ribosomal subunit.

The polypeptide is Small ribosomal subunit protein eS32 (Pyrococcus furiosus (strain ATCC 43587 / DSM 3638 / JCM 8422 / Vc1)).